The sequence spans 148 residues: MSDSVEMFTDGACKGNPGPGGWGVLMIYKGVEKELWGGERETTNNRMELMAAIQGLMSLKRECEVVLTTDSQYVMKGINEWMVNWKKRGWKTAAKEPVKNADLWQQLDEQVNRHKVTWKWVRGHIGHPGNERADQLANRGVDEVRAQR.

Residues 1 to 142 (MSDSVEMFTD…ADQLANRGVD (142 aa)) enclose the RNase H type-1 domain. 4 residues coordinate Mg(2+): Asp-10, Glu-48, Asp-70, and Asp-134.

It belongs to the RNase H family. As to quaternary structure, monomer. Mg(2+) is required as a cofactor.

Its subcellular location is the cytoplasm. It catalyses the reaction Endonucleolytic cleavage to 5'-phosphomonoester.. Endonuclease that specifically degrades the RNA of RNA-DNA hybrids. This chain is Ribonuclease H, found in Pseudomonas putida (strain ATCC 700007 / DSM 6899 / JCM 31910 / BCRC 17059 / LMG 24140 / F1).